The primary structure comprises 249 residues: Probable transcriptional regulatory protein AB57_1731 (249 aa).

It belongs to the TACO1 family.

It localises to the cytoplasm. This is Probable transcriptional regulatory protein AB57_1731 from Acinetobacter baumannii (strain AB0057).